A 694-amino-acid polypeptide reads, in one-letter code: Elongation factor G (694 aa).

The region spanning Glu-8–Thr-287 is the tr-type G domain. GTP is bound by residues Ala-17–Thr-24, Asp-86–His-90, and Asn-140–Asp-143.

This sequence belongs to the TRAFAC class translation factor GTPase superfamily. Classic translation factor GTPase family. EF-G/EF-2 subfamily.

The protein resides in the cytoplasm. In terms of biological role, catalyzes the GTP-dependent ribosomal translocation step during translation elongation. During this step, the ribosome changes from the pre-translocational (PRE) to the post-translocational (POST) state as the newly formed A-site-bound peptidyl-tRNA and P-site-bound deacylated tRNA move to the P and E sites, respectively. Catalyzes the coordinated movement of the two tRNA molecules, the mRNA and conformational changes in the ribosome. This Brucella melitensis biotype 1 (strain ATCC 23456 / CCUG 17765 / NCTC 10094 / 16M) protein is Elongation factor G.